A 537-amino-acid polypeptide reads, in one-letter code: Probable glucomannan 4-beta-mannosyltransferase 15 (537 aa).

Residues 50–70 traverse the membrane as a helical segment; it reads FIVPLFKCIVVMCLIISLLVF. The active site involves D150. Substrate contacts are provided by D209 and D211. The active site involves D303. A run of 4 helical transmembrane segments spans residues 382-402, 418-438, 494-514, and 515-535; these read IVVHFFTYFFYCVILPTSVFL, VITLLSAIATPRSFYLVIFWV, EMMMGIYILCCACYDFAFGNA, and FLYLYLFMQATAFLISGVGFV.

It belongs to the glycosyltransferase 2 family. Plant cellulose synthase-like A subfamily.

The protein resides in the golgi apparatus membrane. It catalyses the reaction GDP-mannose + (glucomannan)n = GDP + (glucomannan)n+1.. Its function is as follows. Probable mannan synthase which consists of a 4-beta-mannosyltransferase activity on mannan using GDP-mannose. The beta-1,4-mannan product is the backbone for galactomannan synthesis by galactomannan galactosyltransferase. Galactomannan is a noncellulosic polysaccharides of plant cell wall. In Arabidopsis thaliana (Mouse-ear cress), this protein is Probable glucomannan 4-beta-mannosyltransferase 15.